A 397-amino-acid polypeptide reads, in one-letter code: Phosphoglycerate kinase (397 aa).

Residues 25 to 27 (DLN), arginine 41, 64 to 67 (HLGR), arginine 118, and arginine 151 contribute to the substrate site. ATP contacts are provided by residues lysine 202, glutamate 324, and 350–353 (GGDT).

Belongs to the phosphoglycerate kinase family. Monomer.

It is found in the cytoplasm. The catalysed reaction is (2R)-3-phosphoglycerate + ATP = (2R)-3-phospho-glyceroyl phosphate + ADP. It participates in carbohydrate degradation; glycolysis; pyruvate from D-glyceraldehyde 3-phosphate: step 2/5. The polypeptide is Phosphoglycerate kinase (Acidovorax sp. (strain JS42)).